Reading from the N-terminus, the 274-residue chain is MTGLMVTDITNIAKEYNLTAFSEDVYPCNKNYELTNGQLSALKTINVVLTTRSDNYEKDVTYNDDDDHDRCIVSEIGSHHSFNDEKDNYIQSNNIQQTPSLSAVFDDNKRVHLLEQEIAELRKKKTKSKNLLDFTNTLFNKNPLRIGILNKRAIILNYASMNNSPLTMEDLEACEDEEIENMYISIKQYHEVHKKKLIVTNIISILISVIEQLLVRIGFDEIKGLSKEVTSTIIDLEIGEDCEQLATKMGVANNPVINISLFILKIFIRRINIL.

A coiled-coil region spans residues aspartate 106 to asparagine 136.

This sequence belongs to the poxviridae A11 family. As to quaternary structure, homomultimer. Interacts with A32. Post-translationally, phosphorylated by a F10-independent mechanism.

It is found in the host cytoplasm. Its function is as follows. Required for viral crescent formation early during virus morphogenesis. In Fowlpox virus (strain NVSL) (FPV), this protein is Protein A11 homolog.